Consider the following 91-residue polypeptide: MALLQQEKQQIIESYRLHDTDTGSAEVQVALLTSRINQLSQHLQRNPKDFNSRRGLLMMIGRRKRLLNYIAKHSPDRFRELAERLNIRVKK.

It belongs to the universal ribosomal protein uS15 family. In terms of assembly, part of the 30S ribosomal subunit. Forms a bridge to the 50S subunit in the 70S ribosome, contacting the 23S rRNA.

Functionally, one of the primary rRNA binding proteins, it binds directly to 16S rRNA where it helps nucleate assembly of the platform of the 30S subunit by binding and bridging several RNA helices of the 16S rRNA. Forms an intersubunit bridge (bridge B4) with the 23S rRNA of the 50S subunit in the ribosome. This Synechococcus sp. (strain JA-2-3B'a(2-13)) (Cyanobacteria bacterium Yellowstone B-Prime) protein is Small ribosomal subunit protein uS15.